A 364-amino-acid chain; its full sequence is Alpha-2-HS-glycoprotein (364 aa).

The segment at residues Met1–Ser15 is a signal peptide (or 17). Residues Tyr27–Asp133 form the Cystatin fetuin-A-type 1 domain. Cystine bridges form between Cys32-Cys355, Cys89-Cys100, Cys114-Cys132, Cys146-Cys149, Cys208-Cys219, and Cys230-Cys248. N-linked (GlcNAc...) asparagine glycosylation occurs at Asn99. Residues Ser134, Ser135, and Ser138 each carry the phosphoserine modification. The 113-residue stretch at Lys144–Val256 folds into the Cystatin fetuin-A-type 2 domain. Residues Asn156 and Asn176 are each glycosylated (N-linked (GlcNAc...) asparagine). O-linked (GalNAc...) serine glycosylation occurs at Ser301. At Thr319 the chain carries Phosphothreonine. Residues Ser321, Ser325, Ser328, and Ser330 each carry the phosphoserine modification. Residue Thr339 is glycosylated (O-linked (GalNAc...) threonine).

The protein belongs to the fetuin family. Phosphorylated by FAM20C in the extracellular medium.

It localises to the secreted. This is Alpha-2-HS-glycoprotein (AHSG) from Ovis aries (Sheep).